The chain runs to 146 residues: Putative pre-16S rRNA nuclease (146 aa).

The protein belongs to the YqgF nuclease family.

It localises to the cytoplasm. In terms of biological role, could be a nuclease involved in processing of the 5'-end of pre-16S rRNA. The sequence is that of Putative pre-16S rRNA nuclease from Pseudomonas savastanoi pv. phaseolicola (strain 1448A / Race 6) (Pseudomonas syringae pv. phaseolicola (strain 1448A / Race 6)).